We begin with the raw amino-acid sequence, 874 residues long: Coatomer subunit gamma-1 (874 aa).

Basic and acidic residues predominate over residues 1 to 11 (MLKKFDKKDEE). Residues 1 to 21 (MLKKFDKKDEESGGGSNPFQH) form a disordered region. HEAT repeat units follow at residues 64–101 (TEATEAFFAMTKLFQSNDPTLRRMCYLTIKEMSCIAED), 283–320 (KELAPAVSVLQLFCSSPKAALRYAAVRTLNKVAMKHPS), 322–355 (VTACNLDLENLVTDANRSIATLAITTLLKTGSEG), and 356–392 (SIDRLMKQISSFMSEISDEFKVVVVQAISALCQKYPR). T594 is subject to Phosphothreonine. The segment at 609 to 874 (RQEIFQEQLA…PVDIVLASVG (266 aa)) is interaction with ZNF289/ARFGAP2.

Belongs to the COPG family. In terms of assembly, oligomeric complex that consists of at least the alpha, beta, beta', gamma, delta, epsilon and zeta subunits. Interacts with ZNF289/ARFGAP2 through its C-terminal appendage domain. Interacts with EGFR upon EGF treatment; interaction is essential for regulation of EGF-dependent nuclear transport of EGFR by retrograde trafficking from the Golgi to the ER. The coatomer interacts with KDEL receptors; the interaction is important for retrograde trafficking of KDEL-bearing proteins from the Golgi to the endoplasmic reticulum. Interacts with COPB1. Interacts with TMED10 (via C-terminus). Interacts with TMED2, TMED3, TMED7 and TMED9.

The protein resides in the cytoplasm. It is found in the cytosol. The protein localises to the golgi apparatus membrane. It localises to the cytoplasmic vesicle. Its subcellular location is the COPI-coated vesicle membrane. Its function is as follows. The coatomer is a cytosolic protein complex that binds to dilysine motifs and reversibly associates with Golgi non-clathrin-coated vesicles, which further mediate biosynthetic protein transport from the ER, via the Golgi up to the trans Golgi network. Coatomer complex is required for budding from Golgi membranes, and is essential for the retrograde Golgi-to-ER transport of dilysine-tagged proteins. In mammals, the coatomer can only be recruited by membranes associated to ADP-ribosylation factors (ARFs), which are small GTP-binding proteins; the complex also influences the Golgi structural integrity, as well as the processing, activity, and endocytic recycling of LDL receptors. Required for limiting lipid storage in lipid droplets. Involved in lipid homeostasis by regulating the presence of perilipin family members PLIN2 and PLIN3 at the lipid droplet surface and promoting the association of adipocyte triglyceride lipase (PNPLA2) with the lipid droplet surface to mediate lipolysis. This is Coatomer subunit gamma-1 (COPG1) from Bos taurus (Bovine).